The sequence spans 248 residues: Triosephosphate isomerase (248 aa).

A Phosphothreonine modification is found at Thr4. 2 residues coordinate substrate: Asn10 and Lys12. Ser71 carries the post-translational modification Phosphoserine. Catalysis depends on His95, which acts as the Electrophile. Glu165 functions as the Proton acceptor in the catalytic mechanism. A Phosphoserine modification is found at Ser215. A Glycyl lysine isopeptide (Lys-Gly) (interchain with G-Cter in ubiquitin) cross-link involves residue Lys223.

The protein belongs to the triosephosphate isomerase family. Homodimer.

The catalysed reaction is D-glyceraldehyde 3-phosphate = dihydroxyacetone phosphate. The protein operates within carbohydrate biosynthesis; gluconeogenesis. It participates in carbohydrate degradation; glycolysis; D-glyceraldehyde 3-phosphate from glycerone phosphate: step 1/1. This chain is Triosephosphate isomerase (TPI1), found in Saccharomyces cerevisiae (strain ATCC 204508 / S288c) (Baker's yeast).